The primary structure comprises 84 residues: ATP synthase subunit c (84 aa).

The next 2 membrane-spanning stretches (helical) occupy residues 10-30 (IAVG…FALL) and 53-73 (FIIA…ALLF).

This sequence belongs to the ATPase C chain family. In terms of assembly, F-type ATPases have 2 components, F(1) - the catalytic core - and F(0) - the membrane proton channel. F(1) has five subunits: alpha(3), beta(3), gamma(1), delta(1), epsilon(1). F(0) has three main subunits: a(1), b(2) and c(10-14). The alpha and beta chains form an alternating ring which encloses part of the gamma chain. F(1) is attached to F(0) by a central stalk formed by the gamma and epsilon chains, while a peripheral stalk is formed by the delta and b chains.

Its subcellular location is the cell inner membrane. Functionally, f(1)F(0) ATP synthase produces ATP from ADP in the presence of a proton or sodium gradient. F-type ATPases consist of two structural domains, F(1) containing the extramembraneous catalytic core and F(0) containing the membrane proton channel, linked together by a central stalk and a peripheral stalk. During catalysis, ATP synthesis in the catalytic domain of F(1) is coupled via a rotary mechanism of the central stalk subunits to proton translocation. Its function is as follows. Key component of the F(0) channel; it plays a direct role in translocation across the membrane. A homomeric c-ring of between 10-14 subunits forms the central stalk rotor element with the F(1) delta and epsilon subunits. The polypeptide is ATP synthase subunit c (Vibrio alginolyticus).